A 270-amino-acid chain; its full sequence is Transcription factor PU.1 (270 aa).

Residues 124 to 162 (LSPAQPSSDEEEGERQSPPLEVSDGEADGLEPGPGLLHG) form a disordered region. Phosphoserine occurs at positions 140 and 146. Residues 153 to 162 (LEPGPGLLHG) show a composition bias toward low complexity. A DNA-binding region (ETS) is located at residues 170 to 253 (IRLYQFLLDL…VKKKLTYQFS (84 aa)). Lysine 217, arginine 230, arginine 233, and lysine 243 together coordinate DNA.

The protein belongs to the ETS family. Binds DNA as a monomer. Can form homomers. Directly interacts with CEBPD/NF-IL6-beta; this interaction does not affect DNA-binding properties of each partner. Interacts with NONO/p54(nrb). Interacts with RUNX1/AML1. Interacts with GFI1; the interaction represses SPI1 transcriptional activity, hence blocks SPI1-induced macrophage differentiation of myeloid progenitor cells. Interacts with CEBPE. Interacts with IRF4/Pip and IRF8. Interacts with JUN. Interacts with RB1. Interacts with TBP.

Its subcellular location is the nucleus. Its activity is regulated as follows. Transcriptional activity at macrophage-specific genes is inhibited by interaction with GFI1, which results in the inhibition of SPI1-induced macrophage differentiation of myeloid progenitor cells, but not that of the granulocyte lineage. Functionally, pioneer transcription factor, which controls hematopoietic cell fate by decompacting stem cell heterochromatin and allowing other transcription factors to enter otherwise inaccessible genomic sites. Once in open chromatin, can directly control gene expression by binding genetic regulatory elements and can also more broadly influence transcription by recruiting transcription factors, such as interferon regulatory factors (IRFs), to otherwise inaccessible genomic regions. Transcriptionally activates genes important for myeloid and lymphoid lineages, such as CSF1R. Transcriptional activation from certain promoters, possibly containing low affinity binding sites, is achieved cooperatively with other transcription factors. FCER1A transactivation is achieved in cooperation with GATA1. May be particularly important for the pro- to pre-B cell transition. Binds (via the ETS domain) onto the purine-rich DNA core sequence 5'-GAGGAA-3', also known as the PU-box. In vitro can bind RNA and interfere with pre-mRNA splicing. The sequence is that of Transcription factor PU.1 (SPI1) from Sus scrofa (Pig).